The following is a 368-amino-acid chain: WAT1-related protein At5g40240 (368 aa).

The next 10 membrane-spanning stretches (helical) occupy residues 18–38 (VVPF…NTLF), 50–70 (VFVF…SVIF), 82–102 (PLFF…IAGC), 111–131 (TLAS…AVIF), 142–162 (ATQA…VVVL), 194–214 (WIIG…WYIL), 226–246 (ITVV…VCLF), 260–280 (ISLA…ALTH), 292–312 (ISLF…IFLG), and 315–335 (LHLG…TVIW). 2 EamA domains span residues 33 to 161 (GSNT…LVVV) and 208 to 334 (ISVW…YTVI).

The protein belongs to the drug/metabolite transporter (DMT) superfamily. Plant drug/metabolite exporter (P-DME) (TC 2.A.7.4) family.

Its subcellular location is the membrane. The chain is WAT1-related protein At5g40240 from Arabidopsis thaliana (Mouse-ear cress).